The chain runs to 325 residues: Alkanal monooxygenase beta chain (325 aa).

Belongs to the bacterial luciferase oxidoreductase family. Heterodimer of an alpha and a beta chain.

The catalysed reaction is a long-chain fatty aldehyde + FMNH2 + O2 = a long-chain fatty acid + hnu + FMN + H2O + 2 H(+). Functionally, light-emitting reaction in luminous bacteria. The specific role of the beta subunit is unknown, but it is absolutely required for bioluminescence activity. The chain is Alkanal monooxygenase beta chain (luxB) from Photobacterium leiognathi.